The sequence spans 246 residues: Glandular kallikrein (246 aa).

Residues 1 to 7 (APPIQSR) constitute a propeptide that is removed on maturation. The region spanning 8–243 (IIGGRECEKN…YLDWINDTIT (236 aa)) is the Peptidase S1 domain. Disulfide bonds link C14–C158, C33–C49, C135–C204, C169–C183, and C194–C219. H48 (charge relay system) is an active-site residue. N85 carries an N-linked (GlcNAc...) asparagine glycan. Residues 85–104 (NLSLLKXHTKADGKDYSHDL) are kallikrein (autolysis) loop. D103 (charge relay system) is an active-site residue. S198 serves as the catalytic Charge relay system. A glycan (N-linked (GlcNAc...) asparagine) is linked at N239.

The protein belongs to the peptidase S1 family. Kallikrein subfamily. As to quaternary structure, monomer.

The enzyme catalyses Preferential cleavage of Arg-|-Xaa bonds in small molecule substrates. Highly selective action to release kallidin (lysyl-bradykinin) from kininogen involves hydrolysis of Met-|-Xaa or Leu-|-Xaa.. Glandular kallikreins cleave Met-Lys and Arg-Ser bonds in kininogen to release Lys-bradykinin. The polypeptide is Glandular kallikrein (Sus scrofa (Pig)).